Consider the following 583-residue polypeptide: Probable GTP diphosphokinase CRSH, chloroplastic (583 aa).

A chloroplast-targeting transit peptide spans 1 to 58; that stretch reads MSVIRPSPIPIPRCRSQVLHRRLYSIQLIQRRRRRWNPRSEVEDTAIESTARSPEAAG. The HD domain maps to 112–212; it reads PLSKALSLSI…MDLVSKLDEM (101 aa). EF-hand domains follow at residues 470 to 505 and 507 to 539; these read TTTN…LGAP and EDAE…VEFM. Positions 483, 485, 487, 489, 494, 517, 519, 521, 523, and 528 each coordinate Ca(2+).

This sequence belongs to the RelA/SpoT family. In terms of tissue distribution, expressed in shoots, cotyledons, rosette and cauline leaves, stems, sepals, pistils and siliques.

It localises to the plastid. Its subcellular location is the chloroplast. The catalysed reaction is GTP + ATP = guanosine 3'-diphosphate 5'-triphosphate + AMP. Activated by calcium. Possesses calcium-dependent ppGpp (guanosine 3'-diphosphate 5'-diphosphate) synthetase activity in vitro and is able to functionally complement E.coli relA mutants. Plays an important role in the timing adjustment of pistil and pollen maturation required for successful pollination. May be involved in a rapid plant ppGpp-mediated response to pathogens and other stresses. This Arabidopsis thaliana (Mouse-ear cress) protein is Probable GTP diphosphokinase CRSH, chloroplastic (CRSH).